We begin with the raw amino-acid sequence, 601 residues long: Chaperone protein DnaK (601 aa).

T175 carries the phosphothreonine; by autocatalysis modification. Residues 570 to 601 (FAQKAASKETSKNEQNEDGSIDAEIKEEDPKA) are disordered. A compositionally biased stretch (basic and acidic residues) spans 575-584 (ASKETSKNEQ). Acidic residues predominate over residues 585-601 (NEDGSIDAEIKEEDPKA).

The protein belongs to the heat shock protein 70 family.

In terms of biological role, acts as a chaperone. This Mycoplasma mobile (strain ATCC 43663 / 163K / NCTC 11711) (Mesomycoplasma mobile) protein is Chaperone protein DnaK.